We begin with the raw amino-acid sequence, 599 residues long: Microtubule-associated protein 70-2 (599 aa).

The disordered stretch occupies residues 1–30 (MADGGGGEEGSASALRGSARRRGAVQPAGL). Positions 43–349 (DPVKVELNRL…ARSEAQLKEK (307 aa)) form a coiled coil. Residues 227–460 (ILDRLHRQKV…HLLNRSTDAV (234 aa)) are required for targeting to microtubules. 2 disordered regions span residues 357–453 (LEDG…PHLL) and 557–599 (AMRL…RNLQ). Low complexity predominate over residues 404-420 (RRSPSFNSRSSLSTSSS). Residues 533–570 (LTKAMEVEAKKMRREVAAMEKEVAAMRLDKDQENKAKR) are a coiled coil. Residues 557–568 (AMRLDKDQENKA) are compositionally biased toward basic and acidic residues.

Belongs to the MAP70 family.

The protein resides in the cytoplasm. It is found in the cytoskeleton. Functionally, plant-specific protein that interact with microtubules. The protein is Microtubule-associated protein 70-2 (MAP70.2) of Oryza sativa subsp. japonica (Rice).